A 465-amino-acid chain; its full sequence is FAD-dependent oxidoreductase pigF (465 aa).

Positions 1-17 (MMLLTLLILSSVGLAAA) are cleaved as a signal peptide. 4 N-linked (GlcNAc...) asparagine glycosylation sites follow: N95, N138, N260, and N327. The GPI-anchor amidated aspartate moiety is linked to residue D444. A propeptide spans 445-465 (SASGIWNLTNAVVLPGLLTGL) (removed in mature form). N451 carries an N-linked (GlcNAc...) asparagine glycan.

This sequence belongs to the beta-cyclopiazonate dehydrogenase family. It depends on FAD as a cofactor.

The protein resides in the cell membrane. It functions in the pathway secondary metabolite biosynthesis. FAD-dependent oxidoreductase; part of the gene cluster that mediates the biosynthesis of azaphilone pigments (MonAzPs), a complex mixture of compounds with a common azaphilone skeleton very widely used as food colorants. Within the pathway, pigF desaturates C6(7) to afford the orange and red pigments from yellow pigments. The first step of the pathway is performed by the nrPKS pigA that forms the hexaketide precursor from successive condensations of five malonyl-CoA units, with a simple acetyl-CoA starter unit. The role of esterase pigG is not clear, but it may play at most a supplementary role in the formation of the benzaldehyde produced by the pigA nrPKS. This very reactive benzaldehyde is intercepted by the pigC ketoreductase that to provide the first stable enzyme-free MonAzPs intermediate, 6-(4-hydroxy-2-oxopentyl)-3-methyl-2,4-dioxocyclohexane carbaldehyde, also known as M7PKS-1. The FAD-dependent monooxygenase pigN hydroxylates M7PKS-1 at C-4, which triggers the formation of the pyran ring. PigJ, pigK and pigD are involved in the acetylation of the pyran ring. PigJ and pigK form the two subunits of a dedicated fungal FAS that produces the side chain fatty acyl moiety of MonAzPs and pigD transfers the fatty acyl chain to the C-4 alcohol. PigM and pigO are involved in the elimination of the omega-1 alcohol. PigM acts as an O-acetyltransferase that synthesizes the putative O-11 acetyl intermediate whereas pigO eliminates acetic acid to yield an intermediate with a C10(11) double bond. The dehydration of the C-11 alcohol followed by the reduction of the C6(7) double bond by the NAD(P)H-dependent oxidoreductase pigE increases the electrophilicity of the C-5 ketone of the resulting acyl benzopyran. This in turn sets up the C-5 ketone for an intramolecular Knoevenagel aldol condensation with the C-20 enol of the side chain. This condensation affords the characteristic linear tricyclic carbon skeletons of the yellow pigments that serve as the common precursors for the classical yellow pigments monascin and ankaflavin, orange pigments rubopunctatin and monascorubrin, and red pigments ribropunctamine and monascorubramine. The FAD-dependent oxidoreductase pigF is especially invoved in the biosynthesis of orange and red pigments via desaturation of C6(7). This chain is FAD-dependent oxidoreductase pigF, found in Monascus ruber (Mold).